A 317-amino-acid chain; its full sequence is Beta-ketoacyl-[acyl-carrier-protein] synthase III (317 aa).

Catalysis depends on residues C112 and H244. The interval 245–249 (QANLR) is ACP-binding. Residue N274 is part of the active site.

This sequence belongs to the thiolase-like superfamily. FabH family. Homodimer.

The protein resides in the cytoplasm. The enzyme catalyses malonyl-[ACP] + acetyl-CoA + H(+) = 3-oxobutanoyl-[ACP] + CO2 + CoA. The protein operates within lipid metabolism; fatty acid biosynthesis. In terms of biological role, catalyzes the condensation reaction of fatty acid synthesis by the addition to an acyl acceptor of two carbons from malonyl-ACP. Catalyzes the first condensation reaction which initiates fatty acid synthesis and may therefore play a role in governing the total rate of fatty acid production. Possesses both acetoacetyl-ACP synthase and acetyl transacylase activities. Its substrate specificity determines the biosynthesis of branched-chain and/or straight-chain of fatty acids. This Blochmanniella pennsylvanica (strain BPEN) protein is Beta-ketoacyl-[acyl-carrier-protein] synthase III.